The primary structure comprises 182 residues: MQNTKLYSLTLIALGAAIIAVLSPLAIPIGIVPVTLQTLAVGLVATVLKARETFFAILLYLLLGFIGIPVFTGGTSGIAVLFGPTGGFLLAFLVMGTLISWGLHQIKYKTIPAFIINIVGHLLMLVIGTLWLKFFTQVDWSLALKLGFTPFVFVEIIKAILVTIFGLALIRALSHTNKYFTN.

The next 5 membrane-spanning stretches (helical) occupy residues 12–32, 54–74, 78–98, 111–131, and 150–170; these read IALG…IGIV, FFAI…FTGG, IAVL…MGTL, IPAF…GTLW, and PFVF…LALI.

It belongs to the BioY family. In terms of assembly, in E.coli forms a stable energy-coupling factor (ECF) transporter complex composed of 2 membrane-embedded substrate-binding protein (S component), 2 ATP-binding proteins (A and A' components) and 2 transmembrane proteins (T component), probably with a stoichiometry of 2:1:1:2. May be able to interact with more than 1 S component at a time.

It localises to the cell membrane. Functionally, probably a biotin-binding protein that interacts with the energy-coupling factor (ECF) ABC-transporter complex. Unlike classic ABC transporters this ECF transporter provides the energy necessary to transport a number of different substrates. The substrates themselves are bound by transmembrane, not extracytoplasmic soluble proteins. The polypeptide is Biotin transporter BioY2 (bioY2) (Lactococcus lactis subsp. cremoris (strain MG1363)).